The primary structure comprises 50 residues: uncharacterized protein (50 aa).

Its subcellular location is the mitochondrion. This is an uncharacterized protein from Saccharomyces cerevisiae (strain ATCC 204508 / S288c) (Baker's yeast).